A 401-amino-acid polypeptide reads, in one-letter code: tRNA N6-adenosine threonylcarbamoyltransferase (401 aa).

Residues histidine 111 and histidine 115 each coordinate Fe cation. Substrate is bound by residues leucine 191–glycine 195, aspartate 223, glycine 236, and asparagine 336. Aspartate 364 contributes to the Fe cation binding site.

Belongs to the KAE1 / TsaD family. Fe(2+) is required as a cofactor.

It localises to the cytoplasm. The catalysed reaction is L-threonylcarbamoyladenylate + adenosine(37) in tRNA = N(6)-L-threonylcarbamoyladenosine(37) in tRNA + AMP + H(+). In terms of biological role, required for the formation of a threonylcarbamoyl group on adenosine at position 37 (t(6)A37) in tRNAs that read codons beginning with adenine. Is involved in the transfer of the threonylcarbamoyl moiety of threonylcarbamoyl-AMP (TC-AMP) to the N6 group of A37, together with TsaE and TsaB. TsaD likely plays a direct catalytic role in this reaction. In Tropheryma whipplei (strain TW08/27) (Whipple's bacillus), this protein is tRNA N6-adenosine threonylcarbamoyltransferase.